The sequence spans 326 residues: Putative ribose-phosphate pyrophosphokinase 2 (326 aa).

Residues 43–45 (DGE) and 102–103 (RQ) each bind ATP. Histidine 136 contacts Mg(2+). D-ribose 5-phosphate-binding positions include aspartate 225 and 229–233 (NTGKT).

Belongs to the ribose-phosphate pyrophosphokinase family. Class I subfamily. In terms of assembly, homohexamer. It depends on Mg(2+) as a cofactor.

The protein localises to the cytoplasm. It catalyses the reaction D-ribose 5-phosphate + ATP = 5-phospho-alpha-D-ribose 1-diphosphate + AMP + H(+). Its pathway is metabolic intermediate biosynthesis; 5-phospho-alpha-D-ribose 1-diphosphate biosynthesis; 5-phospho-alpha-D-ribose 1-diphosphate from D-ribose 5-phosphate (route I): step 1/1. In terms of biological role, involved in the biosynthesis of the central metabolite phospho-alpha-D-ribosyl-1-pyrophosphate (PRPP) via the transfer of pyrophosphoryl group from ATP to 1-hydroxyl of ribose-5-phosphate (Rib-5-P). This chain is Putative ribose-phosphate pyrophosphokinase 2, found in Streptococcus pyogenes serotype M3 (strain SSI-1).